The sequence spans 64 residues: Large ribosomal subunit protein bL35 (64 aa).

It belongs to the bacterial ribosomal protein bL35 family.

The polypeptide is Large ribosomal subunit protein bL35 (Clavibacter michiganensis subsp. michiganensis (strain NCPPB 382)).